Here is a 35-residue protein sequence, read N- to C-terminus: Small toxic polypeptide LdrB (35 aa).

Residues 10-30 traverse the membrane as a helical segment; that stretch reads FWHDLAAPILAGIITAAIVGW.

It belongs to the Ldr toxic peptide family.

It is found in the cell inner membrane. Functionally, toxic component of a type I toxin-antitoxin (TA) system. Overexpression causes rapid cell killing, probably by disrupting the cell inner membrane and disruption of ATP synthesis. The sequence is that of Small toxic polypeptide LdrB (ldrB) from Escherichia coli (strain K12).